Consider the following 201-residue polypeptide: Imidazoleglycerol-phosphate dehydratase (201 aa).

This sequence belongs to the imidazoleglycerol-phosphate dehydratase family.

It localises to the cytoplasm. It carries out the reaction D-erythro-1-(imidazol-4-yl)glycerol 3-phosphate = 3-(imidazol-4-yl)-2-oxopropyl phosphate + H2O. It functions in the pathway amino-acid biosynthesis; L-histidine biosynthesis; L-histidine from 5-phospho-alpha-D-ribose 1-diphosphate: step 6/9. The sequence is that of Imidazoleglycerol-phosphate dehydratase from Prochlorococcus marinus subsp. pastoris (strain CCMP1986 / NIES-2087 / MED4).